Reading from the N-terminus, the 60-residue chain is U-actitoxin-Avd12b (60 aa).

Positions 1–6 (SKEGMS) are cleaved as a signal peptide. The propeptide occupies 7–12 (YEEPEN). In terms of domain architecture, EGF-like spans 14–56 (EGVACTGQYAESFCLNGGTCRYIQSIGEYYCICVGDYTGHRCE). 3 disulfide bridges follow: cysteine 18/cysteine 33, cysteine 27/cysteine 44, and cysteine 46/cysteine 55.

It belongs to the EGF domain peptide family.

Its subcellular location is the secreted. The protein localises to the nematocyst. Functionally, has both toxic and EGF activity. Its EGF activity consists of rounding cells (morphological change) and inducing tyrosine phosphorylation of the EGFR in A431 cells, but with a lower potency that human EGF. This Anemonia viridis (Snakelocks anemone) protein is U-actitoxin-Avd12b.